A 185-amino-acid chain; its full sequence is Mitochondrial inner membrane protease atp23 (185 aa).

H86 lines the a divalent metal cation pocket. Residue E87 is part of the active site. A divalent metal cation is bound at residue H90.

It belongs to the peptidase M76 family.

The protein resides in the mitochondrion inner membrane. Has a dual role in the assembly of mitochondrial ATPase. Acts as a protease that removes N-terminal residues of mitochondrial ATPase CF(0) subunit 6 at the intermembrane space side. Also involved in the correct assembly of the membrane-embedded ATPase CF(0) particle, probably mediating association of subunit 6 with the subunit 9 ring. The chain is Mitochondrial inner membrane protease atp23 (atp23) from Schizosaccharomyces pombe (strain 972 / ATCC 24843) (Fission yeast).